The chain runs to 1091 residues: MSAKAISEQTGKELLYKYICTTSAIQNRFKYARVTPDTDWAHLLQDHPWLLSQSLVVKPDQLIKRRGKLGLVGVNLSLDGVKSWLKPRLGHEATVGKAKGFLKNFLIEPFVPHSQAEEFYVCIYATREGDYVLFHHEGGVDVGDVDAKAQKLLVGVDEKLNTEDIKRHLLVHAPEDKKEVLASFISGLFNFYEDLYFTYLEINPLVVTKDGVYILDLAAKVDATADYICKVKWGDIEFPPPFGREAYPEEAYIADLDAKSGASLKLTLLNPKGRIWTMVAGGGASVVYSDTICDLGGVNELANYGEYSGAPSEQQTYDYAKTILSLMTREKHPEGKILIIGGSIANFTNVAATFKGIVRAIRDYQGPLKEHEVTIFVRRGGPNYQEGLRVMGEVGKTTGIPIHVFGTETHMTAIVGMALGHRPIPNQPPTAAHTANFLLNASGSTSTPAPSRTASFSESRADEVAPAKKAKPAMPQGKSATLFSRHTKAIVWGMQTRAVQGMLDFDYVCSRDEPSVAAMVYPFTGDHKQKFYWGHKEILIPVFKNMADAMKKHPEVDVLINFASLRSAYDSTMETMNYAQIRTIAIIAEGIPEALTRKLIKKADQKGVTIIGPATVGGIKPGCFKIGNTGGMLDNILASKLYRPGSVAYVSRSGGMSNELNNIISRTTDGVYEGVAIGGDRYPGSTFMDHVLRYQDTPGVKMIVVLGEIGGTEEYKICRGIKEGRLTKPVVCWCIGTCATMFSSEVQFGHAGACANQASETAVAKNQALKEAGVFVPRSFDELGEIIQSVYEDLVAKGAIVPAQEVPPPTVPMDYSWARELGLIRKPASFMTSICDERGQELIYAGMPITEVFKEEMGIGGVLGLLWFQRRLPKYSCQFIEMCLMVTADHGPAVSGAHNTIICARAGKDLVSSLTSGLLTIGDRFGGALDAAAKMFSKAFDSGIIPMEFVNKMKKEGKLIMGIGHRVKSINNPDMRVQILKDFVKQHFPATPLLDYALEVEKITTSKKPNLILNVDGFIGVAFVDMLRNCGSFTREEADEYVDIGALNGIFVLGRSMGFIGHYLDQKRLKQGLYRHPWDDISYVLPEHMSM.

Residues 4–265 form the ATP-grasp domain; it reads KAISEQTGKE…LDAKSGASLK (262 aa). ATP contacts are provided by K58, R66, G67, P109, V111, and E118. Y131 is modified (phosphotyrosine). Residue D216 coordinates ATP. Mg(2+) contacts are provided by D257, S260, and A262. S263 bears the Phosphoserine mark. Residues G309, N346, T348, Y364, and R379 each coordinate citrate. Low complexity predominate over residues 442 to 457; that stretch reads SGSTSTPAPSRTASFS. The disordered stretch occupies residues 442 to 478; that stretch reads SGSTSTPAPSRTASFSESRADEVAPAKKAKPAMPQGK. The residue at position 447 (T447) is a Phosphothreonine. At S451 the chain carries Phosphoserine. Phosphoserine; by PKA and PKB/AKT1 or PKB/AKT2 or BCKDK is present on S455. Residue S459 is modified to Phosphoserine. An N6-acetyllysine; alternate mark is found at K530, K536, and K544. Glycyl lysine isopeptide (Lys-Gly) (interchain with G-Cter in ubiquitin); alternate cross-links involve residues K530, K536, and K544. Phosphothreonine is present on T629. At S653 the chain carries Phosphoserine. A Phosphotyrosine modification is found at Y672. H750 (tele-phosphohistidine intermediate) is an active-site residue. 769-779 contacts CoA; it reads LKEAGVFVPRS. A Phosphoserine modification is found at S829. An N6-acetyllysine mark is found at K938, K958, K968, and K1067. Phosphoserine is present on S1090.

It in the N-terminal section; belongs to the succinate/malate CoA ligase beta subunit family. The protein in the C-terminal section; belongs to the succinate/malate CoA ligase alpha subunit family. As to quaternary structure, homotetramer. The cofactor is Mg(2+). In terms of processing, phosphorylated by PKA and GSK3 in a sequential manner; phosphorylation results in activation of its activity. Phosphorylation on Thr-447 and Ser-451 depends on the phosphorylation state of Ser-455. Phosphorylation on Ser-455 is decreased by prior phosphorylation on the other 2 residues. Phosphorylated at Ser-455 by BCKDK and dephosphorylated by protein phosphatase PPM1K. ISGylated. Post-translationally, acetylated at Lys-530, Lys-536 and Lys-544 by KAT2B/PCAF. Acetylation is promoted by glucose and stabilizes the protein, probably by preventing ubiquitination at the same sites. Acetylation promotes de novo lipid synthesis. Deacetylated by SIRT2. In terms of processing, ubiquitinated at Lys-530, Lys-536 and Lys-544 by the BCR(KLHL25) E3 ubiquitin ligase complex and UBR4, leading to its degradation. Ubiquitination is probably inhibited by acetylation at same site. BCR(KLHL25)-mediated degradation of ACLY promotes fatty acid oxidation and is required for differentiation of inducible regulatory T (iTreg) cells.

It is found in the cytoplasm. It localises to the cytosol. The enzyme catalyses oxaloacetate + acetyl-CoA + ADP + phosphate = citrate + ATP + CoA. Phosphorylation results in activation of its activity. Glucose 6-phosphate, fructose 6-phosphate, fructose 2,6-bisphosphate, ribulose 5-phosphate, and fructose 1,6-bisphosphate also act as activators. Its function is as follows. Catalyzes the cleavage of citrate into oxaloacetate and acetyl-CoA, the latter serving as common substrate in multiple biochemical reactions in protein, carbohydrate and lipid metabolism. In Mus musculus (Mouse), this protein is ATP-citrate synthase (Acly).